The primary structure comprises 249 residues: Uridylate kinase (249 aa).

Residue 19-22 (KLSG) participates in ATP binding. Gly-61 serves as a coordination point for UMP. ATP contacts are provided by Gly-62 and Arg-66. UMP is bound by residues Asp-81 and 142-149 (TGNPYFTT). Thr-169, Tyr-175, and Asp-178 together coordinate ATP.

This sequence belongs to the UMP kinase family. In terms of assembly, homohexamer.

It localises to the cytoplasm. It carries out the reaction UMP + ATP = UDP + ADP. It functions in the pathway pyrimidine metabolism; CTP biosynthesis via de novo pathway; UDP from UMP (UMPK route): step 1/1. With respect to regulation, inhibited by UTP. Functionally, catalyzes the reversible phosphorylation of UMP to UDP. The sequence is that of Uridylate kinase from Anaeromyxobacter sp. (strain Fw109-5).